The primary structure comprises 724 residues: Catalase-peroxidase (724 aa).

Residues 1 to 26 form a disordered region; it reads MDENKTKPTGKCPVMHGGNTSTGSSN. Positions 98 to 225 form a cross-link, tryptophyl-tyrosyl-methioninium (Trp-Tyr) (with M-251); the sequence is WHSAGSYRTT…LAAVQMGLIY (128 aa). His99 (proton acceptor) is an active-site residue. A cross-link (tryptophyl-tyrosyl-methioninium (Tyr-Met) (with W-98)) is located at residues 225 to 251; that stretch reads YVNPEGVDGKSDPLRTAQDMRVTFSRM. His266 is a heme b binding site.

It belongs to the peroxidase family. Peroxidase/catalase subfamily. As to quaternary structure, homodimer or homotetramer. It depends on heme b as a cofactor. Formation of the three residue Trp-Tyr-Met cross-link is important for the catalase, but not the peroxidase activity of the enzyme.

The catalysed reaction is H2O2 + AH2 = A + 2 H2O. It catalyses the reaction 2 H2O2 = O2 + 2 H2O. Its function is as follows. Bifunctional enzyme with both catalase and broad-spectrum peroxidase activity. The sequence is that of Catalase-peroxidase from Pectobacterium atrosepticum (strain SCRI 1043 / ATCC BAA-672) (Erwinia carotovora subsp. atroseptica).